The sequence spans 202 residues: D-alanyl-D-alanine dipeptidase (202 aa).

2 residues coordinate Zn(2+): histidine 116 and aspartate 123. Glutamate 181 (proton donor/acceptor) is an active-site residue. Residue histidine 184 participates in Zn(2+) binding.

The protein belongs to the peptidase M15D family. As to quaternary structure, homodimer. The cofactor is Zn(2+). Fe(2+) is required as a cofactor. Requires Co(2+) as cofactor. It depends on Ni(2+) as a cofactor.

The catalysed reaction is D-alanyl-D-alanine + H2O = 2 D-alanine. With respect to regulation, inhibited by aminoalkyl phosphinate analogs. Functionally, catalyzes hydrolysis of the D-alanyl-D-alanine dipeptide. The polypeptide is D-alanyl-D-alanine dipeptidase (vanX) (Enterococcus faecium (Streptococcus faecium)).